Consider the following 337-residue polypeptide: Inositol 2-dehydrogenase (337 aa).

The protein belongs to the Gfo/Idh/MocA family. Homotetramer.

The enzyme catalyses myo-inositol + NAD(+) = scyllo-inosose + NADH + H(+). Its function is as follows. Involved in the oxidation of myo-inositol (MI) to 2-keto-myo-inositol (2KMI or 2-inosose). The polypeptide is Inositol 2-dehydrogenase (Burkholderia vietnamiensis (strain G4 / LMG 22486) (Burkholderia cepacia (strain R1808))).